The sequence spans 282 residues: Putative SLC9B1-like protein SLC9B1P1 (282 aa).

7 consecutive transmembrane segments (helical) span residues 27–47 (LLAI…GGMI), 51–71 (IASL…GFFV), 87–107 (GFLV…IGLH), 135–155 (IITN…GAEV), 174–194 (LALC…GFSF), 198–218 (IFIA…GPLA), and 239–259 (VAFL…GILG).

Belongs to the monovalent cation:proton antiporter 1 (CPA1) transporter (TC 2.A.36) family.

The protein resides in the membrane. The sequence is that of Putative SLC9B1-like protein SLC9B1P1 (SLC9B1P1) from Homo sapiens (Human).